The primary structure comprises 248 residues: MTSHPRDTPQFYLTAPSPCPYLPGQEERKVFTHLVGRRARDLNEILTQGGFRRSQTIAYRPACETCRACVSVRVVVEDFAITGSQRRILQRNAELIGTPEPNRPASEQYALFRRYLDARHGDGGMVDMTVLDYAMMIEDSHVDTHLVVYRERGPDSAIHGRGVGAPVAVCLTDVLADGLSMVYSFYDPDEASRSLGTYMILDHIRRARALGLPYLYLGYWVGGSRKMDYKAKFKPQERLMPQGWVRVE.

This sequence belongs to the R-transferase family. Bpt subfamily.

The protein resides in the cytoplasm. The enzyme catalyses N-terminal L-glutamyl-[protein] + L-leucyl-tRNA(Leu) = N-terminal L-leucyl-L-glutamyl-[protein] + tRNA(Leu) + H(+). It catalyses the reaction N-terminal L-aspartyl-[protein] + L-leucyl-tRNA(Leu) = N-terminal L-leucyl-L-aspartyl-[protein] + tRNA(Leu) + H(+). Its function is as follows. Functions in the N-end rule pathway of protein degradation where it conjugates Leu from its aminoacyl-tRNA to the N-termini of proteins containing an N-terminal aspartate or glutamate. This Methylorubrum extorquens (strain PA1) (Methylobacterium extorquens) protein is Aspartate/glutamate leucyltransferase.